The sequence spans 406 residues: Coiled-coil domain-containing glutamate-rich protein 1 (406 aa).

Disordered stretches follow at residues 43–72 (PGAP…QQHG), 138–167 (GRKK…ADVS), 203–244 (QQEK…KETW), and 278–358 (EEEE…EEFH). Positions 138-158 (GRKKRWGRRGRGLRHHPRHSY) are enriched in basic residues. 2 coiled-coil regions span residues 199-225 (EDMR…SGEA) and 274-359 (LLVE…EFHL). Over residues 203–212 (QQEKVERQQE) the composition is skewed to basic and acidic residues. Acidic residues-rich tracts occupy residues 278 to 294 (EEEE…DQEV) and 301 to 349 (SEEE…VLEE).

Its subcellular location is the nucleus. In terms of biological role, regulator of histone epigenetic modifications and chromatin compaction into the sperm head, required for histone-to-protamine (HTP) transition. HTP is a key event in which somatic histones are first replaced by testis-specific histone variants, then transition proteins (TNPs) are incorporated into the spermatid nucleus, and finally protamines (PRMs) replace the TNPs to promote chromatin condensation. This Homo sapiens (Human) protein is Coiled-coil domain-containing glutamate-rich protein 1 (CCER1).